Here is a 309-residue protein sequence, read N- to C-terminus: L-aminoadipate-semialdehyde dehydrogenase-phosphopantetheinyl transferase (309 aa).

Residues Arg-47, Arg-86–Lys-91, and Asn-108–His-111 contribute to the CoA site. Asp-129 and Glu-181 together coordinate Mg(2+). Glu-181–Lys-185 contacts CoA. A Phosphoserine modification is found at Ser-258.

It belongs to the P-Pant transferase superfamily. AcpS family. Monomer. The cofactor is Mg(2+). Detected in heart, skeletal muscle, placenta, testis, brain, pancreas, liver and kidney.

It is found in the cytoplasm. The protein resides in the cytosol. It catalyses the reaction apo-[ACP] + CoA = holo-[ACP] + adenosine 3',5'-bisphosphate + H(+). The catalysed reaction is apo-[ACP] + acetyl-CoA = acetyl-[ACP] + adenosine 3',5'-bisphosphate + H(+). Functionally, catalyzes the post-translational modification of target proteins by phosphopantetheine. Can transfer the 4'-phosphopantetheine moiety from coenzyme A, regardless of whether the CoA is presented in the free thiol form or as an acetyl thioester, to a serine residue of a broad range of acceptors including the acyl carrier domain of FASN. The polypeptide is L-aminoadipate-semialdehyde dehydrogenase-phosphopantetheinyl transferase (AASDHPPT) (Homo sapiens (Human)).